The sequence spans 85 residues: U5-theraphotoxin-Hhn1a (85 aa).

The first 21 residues, 1-21, serve as a signal peptide directing secretion; it reads MKSQIFFAVAALFLLTVRTYA. A propeptide spanning residues 22–49 is cleaved from the precursor; it reads SKSKEQDLRDALFSAMFSADNQLNPQER. 3 disulfides stabilise this stretch: C51–C65, C58–C70, and C64–C77.

This sequence belongs to the neurotoxin 10 (Hwtx-1) family. 18 (Hntx-VII) subfamily. As to expression, expressed by the venom gland.

It localises to the secreted. Functionally, ion channel impairing toxin that inhibits voltage-gated sodium channels. The recombinantly expressed toxin shows a weak activity against Nav1.7/SCN9A, and shifts the voltage dependence of channel activation to more depolarized potentials. This Cyriopagopus hainanus (Chinese bird spider) protein is U5-theraphotoxin-Hhn1a.